The primary structure comprises 418 residues: NADH-quinone oxidoreductase subunit D (418 aa).

Belongs to the complex I 49 kDa subunit family. In terms of assembly, NDH-1 is composed of 14 different subunits. Subunits NuoB, C, D, E, F, and G constitute the peripheral sector of the complex.

Its subcellular location is the cell inner membrane. The enzyme catalyses a quinone + NADH + 5 H(+)(in) = a quinol + NAD(+) + 4 H(+)(out). NDH-1 shuttles electrons from NADH, via FMN and iron-sulfur (Fe-S) centers, to quinones in the respiratory chain. The immediate electron acceptor for the enzyme in this species is believed to be ubiquinone. Couples the redox reaction to proton translocation (for every two electrons transferred, four hydrogen ions are translocated across the cytoplasmic membrane), and thus conserves the redox energy in a proton gradient. This chain is NADH-quinone oxidoreductase subunit D, found in Neisseria meningitidis serogroup A / serotype 4A (strain DSM 15465 / Z2491).